The following is a 640-amino-acid chain: MAQGSRAPSGPPLPVLPVDDWLNFRVDLFGDEHRRLLLEMLTQGCSNFVGLLNFGVPSPVYALEALVDFQVRNAFMKVKPVAQEIIRICILANHYRNSRDVLRDLRTQLDVLYSDPLKTRLLRGLIRLCRAAQTGVKPEDISVHLGADDVTFGVLKRALVRLHRVRDALGLRASPEAEARYPRLTTYNLLFHPPPFTTVEAVDLCAENLSDVTQRRNRPLRCLTSIKRPGSRTLEDALNDMYLLLTLRHLQLRHALELQMMQDWVVERCNRLCDALYFCYTQAPETRQTFVTLVRGLELARQHSSPAFQPMLYNLLQLLTQLHEANVYLCPGYLHFSAYKLLKKIQSVSDARERGEFGDEDEEQENDGEPREAQLDLEADPTAREGELFFFSKNLYGNGEVFRVPEQPSRYLRRRMFVERPETLQIFYNFHEGKITTETYHLQRIYSMMIEGASRQTGLTPKRFMELLDRAPLGQESEPEITEHRDLFADVFRRPVTDAASSSSASSSSSSASPNSVSLPSARSSSTRTTTPASTYTSAGTSSTTGLLLSSSLSGSHGISSADLEQPPRQRRRMVSVTLFSPYSVAYSHHRRHRRRRSPPPAPRGPAHTRFQGPDSMPSTSYGSDVEDPRDDLAENLRHL.

Disordered stretches follow at residues 353–373, 500–571, and 586–640; these read ERGE…PREA, ASSS…PRQR, and AYSH…LRHL. Positions 358–367 are enriched in acidic residues; sequence GDEDEEQEND. Residues 500-562 show a composition bias toward low complexity; that stretch reads ASSSSASSSS…LSGSHGISSA (63 aa). Positions 588-598 are enriched in basic residues; that stretch reads SHHRRHRRRRS. Basic and acidic residues predominate over residues 631–640; the sequence is DDLAENLRHL.

Belongs to the herpesviridae pp85 family. Interacts with UL82. Interacts with isoform UL35A. Interacts with host UBP7; this interaction significantly inhibits the ability of USP7 to form nuclear bodies. Interacts with host DCAF1 (via C-terminus). Interacts with host SNX5; this interaction allows proper gB localization during viral assembly. Interacts with host TBK1; this interaction prevents type I interferon production. As to quaternary structure, interacts with UL82. Interacts with isoform UL35. Interacts with host UBP7; this interaction significantly inhibits the ability of USP7 to form nuclear bodies. Interacts with host SNX5; this interaction allows proper gB localization during viral assembly.

It localises to the virion tegument. It is found in the host nucleus. The protein localises to the host cytoplasm. Its function is as follows. Plays important role in immediate-early gene expression through interaction with UL82. Forms nuclear bodies in host nucleus, independently of PML. In turn, UL35 nuclear bodies associate with and remodel PML bodies. Through interaction with host DCAF1, causes cells to accumulate in the G2 phase of the cell cycle by inducing a DNA damage response. Regulates viral assembly by controlling the localization of the essential gB through regulation of a retrograde transport pathway. This modulation occurs via binding and inhibition of host sorting nexin 5/SNX5. Also plays a role in the inhibition of pattern recognition receptor-mediated type I interferon signaling at the level of TBK1. In terms of biological role, promotes cytoplasmic UL82 accumulation and inhibits UL35-containing nuclear bodies formation. Regulates viral assembly by controlling the localization of the essential gB through regulation of a retrograde transport pathway. This modulation occurs via binding and inhibition of host sorting nexin 5/SNX5. This is Protein UL35 (UL35) from Homo sapiens (Human).